A 250-amino-acid polypeptide reads, in one-letter code: Adenosylcobinamide-GDP ribazoletransferase (250 aa).

6 helical membrane passes run 33–53, 63–83, 109–129, 137–157, 180–200, and 203–223; these read IASY…LFYI, IVMT…HIDG, LGTN…LFLT, LTAL…SMMI, FAIA…LAVF, and ILTI…LRIG.

This sequence belongs to the CobS family. It depends on Mg(2+) as a cofactor.

The protein localises to the cell membrane. The enzyme catalyses alpha-ribazole + adenosylcob(III)inamide-GDP = adenosylcob(III)alamin + GMP + H(+). The catalysed reaction is alpha-ribazole 5'-phosphate + adenosylcob(III)inamide-GDP = adenosylcob(III)alamin 5'-phosphate + GMP + H(+). It participates in cofactor biosynthesis; adenosylcobalamin biosynthesis; adenosylcobalamin from cob(II)yrinate a,c-diamide: step 7/7. Functionally, joins adenosylcobinamide-GDP and alpha-ribazole to generate adenosylcobalamin (Ado-cobalamin). Also synthesizes adenosylcobalamin 5'-phosphate from adenosylcobinamide-GDP and alpha-ribazole 5'-phosphate. The protein is Adenosylcobinamide-GDP ribazoletransferase of Thermoanaerobacter sp. (strain X514).